The sequence spans 200 residues: Lipopolysaccharide core heptose(II)-phosphate phosphatase (200 aa).

Residues M1–A25 form the signal peptide.

This sequence belongs to the phosphoglycerate mutase family. Ais subfamily.

The protein localises to the periplasm. The protein operates within bacterial outer membrane biogenesis; lipopolysaccharide metabolism. Its function is as follows. Catalyzes the dephosphorylation of heptose(II) of the outer membrane lipopolysaccharide core. The chain is Lipopolysaccharide core heptose(II)-phosphate phosphatase from Escherichia coli O7:K1 (strain IAI39 / ExPEC).